The following is a 150-amino-acid chain: Regulatory protein RecX (150 aa).

The protein belongs to the RecX family.

It is found in the cytoplasm. Functionally, modulates RecA activity. This chain is Regulatory protein RecX, found in Ectopseudomonas mendocina (strain ymp) (Pseudomonas mendocina).